The chain runs to 375 residues: MKSLITPITAGLLLALSQPLLAATDTGGYAATAGGNVTGAVSKTATSMQDIVNIIDAARLDANGKKVKGGAYPLVITYTGNEDSLINAAAANICGQWSKDPRGVEIKEFTKGITIIGANGSSANFGIWIKKSSDVVVQNMRIGYLPGGAKDGDMIRVDDSPNVWVDHNELFAANHECDGTPDNDTTFESAVDIKGASNTVTVSYNYIHGVKKVGLDGSSSSDTGRNITYHHNYYNDVNARLPLQRGGLVHAYNNLYTNITGSGLNVRQNGQALIENNWFEKAINPVTSRYDGKNFGTWVLKGNNITKPADFSTYSITWTADTKPYVNADSWTSTGTFPTVAYNYSPVSAQCVKDKLPGYAGVGKNLATLTSTACK.

The first 22 residues, 1 to 22, serve as a signal peptide directing secretion; that stretch reads MKSLITPITAGLLLALSQPLLA. Cysteine 94 and cysteine 177 form a disulfide bridge. Positions 151, 153, 188, and 192 each coordinate Ca(2+). Arginine 240 is an active-site residue. Cysteine 351 and cysteine 374 are oxidised to a cystine.

It belongs to the polysaccharide lyase 1 family. PLADES subfamily. Requires Ca(2+) as cofactor.

It localises to the secreted. The catalysed reaction is Eliminative cleavage of (1-&gt;4)-alpha-D-galacturonan to give oligosaccharides with 4-deoxy-alpha-D-galact-4-enuronosyl groups at their non-reducing ends.. The protein operates within glycan metabolism; pectin degradation; 2-dehydro-3-deoxy-D-gluconate from pectin: step 2/5. Functionally, involved in maceration and soft-rotting of plant tissue. In Dickeya chrysanthemi (Pectobacterium chrysanthemi), this protein is Pectate lyase C.